The primary structure comprises 21 residues: Putative pancreatic polypeptide 2 (21 aa).

This sequence belongs to the NPY family.

The polypeptide is Putative pancreatic polypeptide 2 (PPY2P) (Homo sapiens (Human)).